The following is a 165-amino-acid chain: Destrin (165 aa).

Residue Ala2 is modified to N-acetylalanine. In terms of domain architecture, ADF-H spans 4–153; sequence GVQVADEVCR…NRACIAEKLG (150 aa). The Nuclear localization signal signature appears at 30–34; the sequence is KKRKK.

Belongs to the actin-binding proteins ADF family.

Actin-depolymerizing protein. Severs actin filaments (F-actin) and binds to actin monomers (G-actin). Acts in a pH-independent manner. The sequence is that of Destrin (DSTN) from Gallus gallus (Chicken).